The sequence spans 122 residues: Large ribosomal subunit protein uL18 (122 aa).

It belongs to the universal ribosomal protein uL18 family. Part of the 50S ribosomal subunit; part of the 5S rRNA/L5/L18/L25 subcomplex. Contacts the 5S and 23S rRNAs.

In terms of biological role, this is one of the proteins that bind and probably mediate the attachment of the 5S RNA into the large ribosomal subunit, where it forms part of the central protuberance. In Thermosipho africanus (strain TCF52B), this protein is Large ribosomal subunit protein uL18.